The primary structure comprises 104 residues: Thioredoxin (104 aa).

In terms of domain architecture, Thioredoxin spans 2 to 104 (AIVKATDQSF…ALQELVNKHL (103 aa)). Residues Cys-29 and Cys-32 are joined by a disulfide bond.

The protein belongs to the thioredoxin family.

Functionally, participates in various redox reactions through the reversible oxidation of its active center dithiol to a disulfide and catalyzes dithiol-disulfide exchange reactions. The chain is Thioredoxin (trxA) from Bacillus subtilis (strain 168).